Consider the following 101-residue polypeptide: ATP synthase subunit c (101 aa).

2 consecutive transmembrane segments (helical) span residues 31–51 (AFAYLGAGLAMIGVIGVGAGQ) and 81–101 (AISETSSIYALLVALILIFVG).

This sequence belongs to the ATPase C chain family. F-type ATPases have 2 components, F(1) - the catalytic core - and F(0) - the membrane proton channel. F(1) has five subunits: alpha(3), beta(3), gamma(1), delta(1), epsilon(1). F(0) has three main subunits: a(1), b(2) and c(10-14). The alpha and beta chains form an alternating ring which encloses part of the gamma chain. F(1) is attached to F(0) by a central stalk formed by the gamma and epsilon chains, while a peripheral stalk is formed by the delta and b chains.

The protein localises to the cell membrane. Functionally, f(1)F(0) ATP synthase produces ATP from ADP in the presence of a proton or sodium gradient. F-type ATPases consist of two structural domains, F(1) containing the extramembraneous catalytic core and F(0) containing the membrane proton channel, linked together by a central stalk and a peripheral stalk. During catalysis, ATP synthesis in the catalytic domain of F(1) is coupled via a rotary mechanism of the central stalk subunits to proton translocation. Its function is as follows. Key component of the F(0) channel; it plays a direct role in translocation across the membrane. A homomeric c-ring of between 10-14 subunits forms the central stalk rotor element with the F(1) delta and epsilon subunits. The protein is ATP synthase subunit c of Mesomycoplasma hyopneumoniae (strain 7448) (Mycoplasma hyopneumoniae).